Here is a 147-residue protein sequence, read N- to C-terminus: Hemoglobin subunit beta-2 (147 aa).

Residues 3-147 enclose the Globin domain; sequence EWTDEERTII…VVSALGRQYH (145 aa). Residues His-64 and His-93 each contribute to the heme b site.

The protein belongs to the globin family. Hb 2 is a heterotetramer of two alpha-2 and two beta-2 chains. Hb 3 is a heterotetramer of two alpha-1 and two beta-2 chains. Red blood cells.

Its function is as follows. Involved in oxygen transport from gills to the various peripheral tissues. This is Hemoglobin subunit beta-2 (hbb2) from Gadus morhua (Atlantic cod).